A 238-amino-acid polypeptide reads, in one-letter code: Purine nucleoside phosphorylase DeoD-type (238 aa).

Histidine 4 is an a purine D-ribonucleoside binding site. Residues glycine 20, arginine 24, arginine 43, and arginine 87–serine 90 contribute to the phosphate site. A purine D-ribonucleoside-binding positions include glutamate 181–glutamate 183 and serine 205–aspartate 206. The active-site Proton donor is aspartate 206.

Belongs to the PNP/UDP phosphorylase family. In terms of assembly, homohexamer; trimer of homodimers.

It catalyses the reaction a purine D-ribonucleoside + phosphate = a purine nucleobase + alpha-D-ribose 1-phosphate. The catalysed reaction is a purine 2'-deoxy-D-ribonucleoside + phosphate = a purine nucleobase + 2-deoxy-alpha-D-ribose 1-phosphate. Its function is as follows. Catalyzes the reversible phosphorolytic breakdown of the N-glycosidic bond in the beta-(deoxy)ribonucleoside molecules, with the formation of the corresponding free purine bases and pentose-1-phosphate. The chain is Purine nucleoside phosphorylase DeoD-type from Mycoplasma genitalium (strain ATCC 33530 / DSM 19775 / NCTC 10195 / G37) (Mycoplasmoides genitalium).